The sequence spans 96 residues: Large ribosomal subunit protein uL18m (96 aa).

The protein belongs to the universal ribosomal protein uL18 family.

The protein localises to the mitochondrion. This chain is Large ribosomal subunit protein uL18m (RPL18), found in Reclinomonas americana.